The sequence spans 470 residues: Cysteine--tRNA ligase (470 aa).

Cys-27 is a Zn(2+) binding site. Positions Pro-29 to Asn-39 match the 'HIGH' region motif. Zn(2+)-binding residues include Cys-207, His-232, and Glu-236. A 'KMSKS' region motif is present at residues Lys-265–Ser-269. Lys-268 contacts ATP.

Belongs to the class-I aminoacyl-tRNA synthetase family. In terms of assembly, monomer. The cofactor is Zn(2+).

Its subcellular location is the cytoplasm. The catalysed reaction is tRNA(Cys) + L-cysteine + ATP = L-cysteinyl-tRNA(Cys) + AMP + diphosphate. The sequence is that of Cysteine--tRNA ligase from Rubrobacter xylanophilus (strain DSM 9941 / JCM 11954 / NBRC 16129 / PRD-1).